The primary structure comprises 167 residues: Small ribosomal subunit protein uS5 (167 aa).

Positions 12–75 constitute an S5 DRBM domain; the sequence is LREKLITINR…ERARGGMRTV (64 aa).

The protein belongs to the universal ribosomal protein uS5 family. In terms of assembly, part of the 30S ribosomal subunit. Contacts proteins S4 and S8.

With S4 and S12 plays an important role in translational accuracy. Its function is as follows. Located at the back of the 30S subunit body where it stabilizes the conformation of the head with respect to the body. In Halorhodospira halophila (strain DSM 244 / SL1) (Ectothiorhodospira halophila (strain DSM 244 / SL1)), this protein is Small ribosomal subunit protein uS5.